Consider the following 410-residue polypeptide: Voltage-dependent chloride channel 2, chloroplastic (410 aa).

Topologically, residues Met-1–Arg-110 are lumenal, thylakoid. A helical transmembrane segment spans residues Val-111–Gly-131. At Tyr-132–Val-147 the chain is on the stromal side. A helical transmembrane segment spans residues Leu-148–Phe-168. Topologically, residues Arg-169 to Arg-315 are lumenal, thylakoid. A run of 2 helical transmembrane segments spans residues Phe-316–Val-336 and Val-337–Ile-357. At Glu-358 to Ser-410 the chain is on the lumenal, thylakoid side.

This sequence belongs to the anion channel-forming bestrophin (TC 1.A.46) family. Voltage-dependent chloride channel subfamily. Mostly expressed in flowers and, to a lower extent, in leaves, stems and roots.

Its subcellular location is the plastid. The protein localises to the chloroplast thylakoid membrane. It carries out the reaction chloride(in) = chloride(out). In terms of biological role, voltage-dependent chloride (Cl) channel probably contributing to proton motive force (PMF) partitioning across the thylakoid membrane by anion influx into the lumen. Influences thylakoid ultrastructure, including lumen size and organization. The chain is Voltage-dependent chloride channel 2, chloroplastic from Arabidopsis thaliana (Mouse-ear cress).